A 161-amino-acid polypeptide reads, in one-letter code: Phosphopantetheine adenylyltransferase (161 aa).

Thr-10 serves as a coordination point for substrate. ATP-binding positions include 10-11 (TF) and His-18. Residues Lys-42, Met-74, and Arg-88 each contribute to the substrate site. ATP is bound by residues 89 to 91 (GLR), Glu-99, and 124 to 130 (WSFISSS).

This sequence belongs to the bacterial CoaD family. As to quaternary structure, homohexamer. Mg(2+) is required as a cofactor.

It is found in the cytoplasm. The catalysed reaction is (R)-4'-phosphopantetheine + ATP + H(+) = 3'-dephospho-CoA + diphosphate. Its pathway is cofactor biosynthesis; coenzyme A biosynthesis; CoA from (R)-pantothenate: step 4/5. Its function is as follows. Reversibly transfers an adenylyl group from ATP to 4'-phosphopantetheine, yielding dephospho-CoA (dPCoA) and pyrophosphate. The chain is Phosphopantetheine adenylyltransferase from Serratia proteamaculans (strain 568).